Here is a 447-residue protein sequence, read N- to C-terminus: tRNA modification GTPase MnmE (447 aa).

Positions 24, 81, and 120 each coordinate (6S)-5-formyl-5,6,7,8-tetrahydrofolate. The region spanning 216–371 is the TrmE-type G domain; it reads GLNVVIAGKP…LRKELSDIAG (156 aa). K(+) is bound at residue N226. Residues 226–231, 245–251, and 270–273 contribute to the GTP site; these read NAGKSS, TDIAGTT, and DTAG. Position 230 (S230) interacts with Mg(2+). Residues T245, I247, and T250 each coordinate K(+). T251 provides a ligand contact to Mg(2+). Residue K447 coordinates (6S)-5-formyl-5,6,7,8-tetrahydrofolate.

The protein belongs to the TRAFAC class TrmE-Era-EngA-EngB-Septin-like GTPase superfamily. TrmE GTPase family. In terms of assembly, homodimer. Heterotetramer of two MnmE and two MnmG subunits. Requires K(+) as cofactor.

It localises to the cytoplasm. Functionally, exhibits a very high intrinsic GTPase hydrolysis rate. Involved in the addition of a carboxymethylaminomethyl (cmnm) group at the wobble position (U34) of certain tRNAs, forming tRNA-cmnm(5)s(2)U34. The sequence is that of tRNA modification GTPase MnmE from Ruthia magnifica subsp. Calyptogena magnifica.